A 661-amino-acid chain; its full sequence is Threonine--tRNA ligase (661 aa).

Positions 1–64 (MSHSVSLTFP…ADGKIEIVTR (64 aa)) constitute a TGS domain. The tract at residues 245-547 (DHRRLGREMD…LLENYAGHMP (303 aa)) is catalytic. Residues C341, H392, and H524 each coordinate Zn(2+).

It belongs to the class-II aminoacyl-tRNA synthetase family. In terms of assembly, homodimer. Zn(2+) is required as a cofactor.

The protein resides in the cytoplasm. The enzyme catalyses tRNA(Thr) + L-threonine + ATP = L-threonyl-tRNA(Thr) + AMP + diphosphate + H(+). In terms of biological role, catalyzes the attachment of threonine to tRNA(Thr) in a two-step reaction: L-threonine is first activated by ATP to form Thr-AMP and then transferred to the acceptor end of tRNA(Thr). Also edits incorrectly charged L-seryl-tRNA(Thr). This is Threonine--tRNA ligase from Sinorhizobium fredii (strain NBRC 101917 / NGR234).